We begin with the raw amino-acid sequence, 316 residues long: Very long chain fatty acid elongase 6 (316 aa).

Asparagine 11 carries an N-linked (GlcNAc...) asparagine glycan. A run of 6 helical transmembrane segments spans residues 30 to 50 (WMLE…LVIF), 64 to 84 (LRGP…MGAA), 117 to 137 (FWTW…IFIV), 142 to 162 (PLIF…WFSY), 167 to 189 (SSAR…YYAL), and 202 to 222 (MIIT…NVWA). Asparagine 242 carries an N-linked (GlcNAc...) asparagine glycan. Residues 245–265 (IAMYSSYFVLFARFFYKAYLA) traverse the membrane as a helical segment.

This sequence belongs to the ELO family. ELOVL6 subfamily. In terms of tissue distribution, detected in the CNS (central nervous system) of third larval instar (at protein level). Expressed in cyst progenitor cells (at protein level). In the adult fly, expressed in several tissues including, sperm, follicular epithelium, nurse cells and cyst cells.

The protein localises to the mitochondrion outer membrane. It is found in the endoplasmic reticulum membrane. The enzyme catalyses a very-long-chain acyl-CoA + malonyl-CoA + H(+) = a very-long-chain 3-oxoacyl-CoA + CO2 + CoA. It carries out the reaction hexadecanoyl-CoA + malonyl-CoA + H(+) = 3-oxooctadecanoyl-CoA + CO2 + CoA. Its pathway is lipid metabolism; fatty acid biosynthesis. Functionally, catalyzes the first and rate-limiting reaction of the four reactions that constitute the long-chain fatty acids elongation cycle. This process allows the addition of 2 carbons to the chain of long- and very long-chain fatty acids (VLCFAs) per cycle. Condensing enzyme that elongates fatty acids with 12, 14 and 16 carbons with higher activity toward C16:0 acyl-CoAs. Catalyzes the synthesis of unsaturated C16 long chain fatty acids and, to a lesser extent, C18:0 and those with low desaturation degree. May participate in the production of saturated and monounsaturated VLCFAs of different chain lengths that are involved in multiple biological processes as precursors of membrane lipids and lipid mediators. The polypeptide is Very long chain fatty acid elongase 6 (Drosophila melanogaster (Fruit fly)).